Consider the following 426-residue polypeptide: MDVGDFVKIKMENTMYCGTLMPSINEDTIVVKMKSGYNVGLKKTKIKSIEILKPENSSNFQPLTSSNNEFKPLNLEKNPNLKNISILSTGGTVASRVDYKTGAVHPAFTANDLIRAVPELLDIANIKGRAILNILSENMLPKYWVMTAEAIKEEIENGAEGIVITHGTDTMHYTAAALSFMVESEVPIILVGAQRSSDRPSSDAALNIISAVMAATEPIKGVYVVMHGEIDDTICNLHEGVKVRKLHSSRRDAFKSVNNTPVAKINPFTKEITYLREIKPQNSSKIKKVSINKKLEEKIALIKVYPGIDSEILKFYVDKGYKAIVLEGTGLGHTPETFFSGIDYANKNNVLVLMSTQTINGRVNMNIYSNGRELQSLGVLPCEDILSEVLFVKIMHLLGNYDLKDAKKLICKNRVGEINESINLKY.

Residues 82–413 (KNISILSTGG…KDAKKLICKN (332 aa)) enclose the Asparaginase/glutaminase domain. Active-site residues include T92, T168, D169, and K245.

Belongs to the asparaginase 1 family. GatD subfamily. As to quaternary structure, heterodimer of GatD and GatE.

It carries out the reaction L-glutamyl-tRNA(Gln) + L-glutamine + ATP + H2O = L-glutaminyl-tRNA(Gln) + L-glutamate + ADP + phosphate + H(+). Allows the formation of correctly charged Gln-tRNA(Gln) through the transamidation of misacylated Glu-tRNA(Gln) in organisms which lack glutaminyl-tRNA synthetase. The reaction takes place in the presence of glutamine and ATP through an activated gamma-phospho-Glu-tRNA(Gln). The GatDE system is specific for glutamate and does not act on aspartate. The sequence is that of Glutamyl-tRNA(Gln) amidotransferase subunit D from Methanococcus vannielii (strain ATCC 35089 / DSM 1224 / JCM 13029 / OCM 148 / SB).